Here is a 346-residue protein sequence, read N- to C-terminus: Aspartate-semialdehyde dehydrogenase (346 aa).

NADP(+)-binding positions include 13–16 (TGAV) and 41–42 (RS). At S98 the chain carries Phosphoserine. R101 contributes to the phosphate binding site. Residue C130 is the Acyl-thioester intermediate of the active site. Y146 is modified (phosphotyrosine). Q157 contacts substrate. Position 160-161 (160-161 (SG)) interacts with NADP(+). Phosphate is bound at residue K221. R243 contributes to the substrate binding site. The Proton acceptor role is filled by H250. N324 contacts NADP(+).

The protein belongs to the aspartate-semialdehyde dehydrogenase family. In terms of assembly, homodimer.

The catalysed reaction is L-aspartate 4-semialdehyde + phosphate + NADP(+) = 4-phospho-L-aspartate + NADPH + H(+). The protein operates within amino-acid biosynthesis; L-lysine biosynthesis via DAP pathway; (S)-tetrahydrodipicolinate from L-aspartate: step 2/4. Its pathway is amino-acid biosynthesis; L-methionine biosynthesis via de novo pathway; L-homoserine from L-aspartate: step 2/3. It functions in the pathway amino-acid biosynthesis; L-threonine biosynthesis; L-threonine from L-aspartate: step 2/5. Its function is as follows. Catalyzes the NADPH-dependent formation of L-aspartate-semialdehyde (L-ASA) by the reductive dephosphorylation of L-aspartyl-4-phosphate. The polypeptide is Aspartate-semialdehyde dehydrogenase (Bacillus subtilis (strain 168)).